Here is a 101-residue protein sequence, read N- to C-terminus: Small ubiquitin-related modifier 1 (101 aa).

At Ser2 the chain carries N-acetylserine. Ser2 is modified (phosphoserine). Lys7 is covalently cross-linked (Glycyl lysine isopeptide (Lys-Gly) (interchain with G-Cter in SUMO1); alternate). Lys7 participates in a covalent cross-link: Glycyl lysine isopeptide (Lys-Gly) (interchain with G-Cter in SUMO2); alternate. Ser9 carries the phosphoserine modification. Residues Lys16, Lys17, and Lys23 each participate in a glycyl lysine isopeptide (Lys-Gly) (interchain with G-Cter in SUMO2) cross-link. Residues 16–25 form a (Microbial infection) Interaction with Tula hantavirus region; that stretch reads KKEGEYIKLK. In terms of domain architecture, Ubiquitin-like spans 20–97; that stretch reads EYIKLKVIGQ…IEVYQEQTGG (78 aa). Lys25 participates in a covalent cross-link: Glycyl lysine isopeptide (Lys-Gly) (interchain with G-Cter in SUMO1). Ser32 bears the Phosphoserine mark. Glycyl lysine isopeptide (Lys-Gly) (interchain with G-Cter in SUMO2) cross-links involve residues Lys37, Lys39, Lys45, and Lys46. A (Microbial infection) Interaction with Tula hantavirus region spans residues 37-40; it reads KVKM. Residue Gly97 forms a Glycyl lysine isopeptide (Gly-Lys) (interchain with K-? in acceptor proteins) linkage. Residues 98–101 constitute a propeptide that is removed on maturation; the sequence is HSTV.

The protein belongs to the ubiquitin family. SUMO subfamily. In terms of assembly, covalently attached to KCNB1; UBE2I increases cross-linking with KCNB1 and PIAS1 decreases cross-links with KCNB1. Interacts with SAE2, RANBP2, PIAS1 and PIAS2. Interacts with PRKN. Covalently attached to a number of proteins such as IKFZ1, PML, RANGAP1, HIPK2, SP100, p53, p73-alpha, MDM2, JUN, DNMT3B and TDG. Also interacts with HIF1A, HIPK2, HIPK3, CHD3, EXOSC9, RAD51 and RAD52. Interacts with USP25 (via ts SIM domain); the interaction weakly sumoylates USP25. Interacts with SIMC1, CASP8AP2, RNF111 and SOBP (via SIM domains). Interacts with BHLHE40/DEC1. Interacts with RWDD3. Interacts with UBE2I/UBC9 and this interaction is enhanced in the presence of RWDD3. Interacts with MTA1. Interacts with SENP2. Interacts with HINT1. As to quaternary structure, (Microbial infection) Interacts with Epstein-barr virus BGLF4. (Microbial infection) Interacts (via N-terminus) with Tula hantavirus nucleoprotein. In terms of assembly, (Microbial infection) Interacts (via N-terminus) with Hantaan hantavirus nucleoprotein. Cleavage of precursor form by SENP1 or SENP2 is necessary for function. In terms of processing, polymeric SUMO1 chains undergo polyubiquitination by RNF4.

Its subcellular location is the nucleus membrane. It localises to the nucleus speckle. The protein localises to the cytoplasm. The protein resides in the nucleus. It is found in the PML body. Its subcellular location is the cell membrane. Ubiquitin-like protein that can be covalently attached to proteins as a monomer or a lysine-linked polymer. Covalent attachment via an isopeptide bond to its substrates requires prior activation by the E1 complex SAE1-SAE2 and linkage to the E2 enzyme UBE2I, and can be promoted by E3 ligases such as PIAS1-4, RANBP2 or CBX4. This post-translational modification on lysine residues of proteins plays a crucial role in a number of cellular processes such as nuclear transport, DNA replication and repair, mitosis and signal transduction. Involved for instance in targeting RANGAP1 to the nuclear pore complex protein RANBP2. Covalently attached to the voltage-gated potassium channel KCNB1; this modulates the gating characteristics of KCNB1. Polymeric SUMO1 chains are also susceptible to polyubiquitination which functions as a signal for proteasomal degradation of modified proteins. May also regulate a network of genes involved in palate development. Covalently attached to ZFHX3. The sequence is that of Small ubiquitin-related modifier 1 (SUMO1) from Homo sapiens (Human).